The sequence spans 350 residues: UDP-N-acetylglucosamine--N-acetylmuramyl-(pentapeptide) pyrophosphoryl-undecaprenol N-acetylglucosamine transferase (350 aa).

Residues 9–11, Asn123, Arg159, Ser181, and Gln281 each bind UDP-N-acetyl-alpha-D-glucosamine; that span reads TGG.

Belongs to the glycosyltransferase 28 family. MurG subfamily.

It is found in the cell inner membrane. The catalysed reaction is di-trans,octa-cis-undecaprenyl diphospho-N-acetyl-alpha-D-muramoyl-L-alanyl-D-glutamyl-meso-2,6-diaminopimeloyl-D-alanyl-D-alanine + UDP-N-acetyl-alpha-D-glucosamine = di-trans,octa-cis-undecaprenyl diphospho-[N-acetyl-alpha-D-glucosaminyl-(1-&gt;4)]-N-acetyl-alpha-D-muramoyl-L-alanyl-D-glutamyl-meso-2,6-diaminopimeloyl-D-alanyl-D-alanine + UDP + H(+). It functions in the pathway cell wall biogenesis; peptidoglycan biosynthesis. Its function is as follows. Cell wall formation. Catalyzes the transfer of a GlcNAc subunit on undecaprenyl-pyrophosphoryl-MurNAc-pentapeptide (lipid intermediate I) to form undecaprenyl-pyrophosphoryl-MurNAc-(pentapeptide)GlcNAc (lipid intermediate II). The chain is UDP-N-acetylglucosamine--N-acetylmuramyl-(pentapeptide) pyrophosphoryl-undecaprenol N-acetylglucosamine transferase from Helicobacter hepaticus (strain ATCC 51449 / 3B1).